The following is a 65-amino-acid chain: MPNAPATASNVERLGLYLSLSISARYERERLAFSASCTWVNLRSFLMALILCPTVIMITYLLYNT.

This is an uncharacterized protein from Bacillus subtilis (Bacteriophage phi-105).